Reading from the N-terminus, the 738-residue chain is 1,4-alpha-glucan branching enzyme GlgB (738 aa).

Asp417 acts as the Nucleophile in catalysis. Glu472 serves as the catalytic Proton donor.

It belongs to the glycosyl hydrolase 13 family. GlgB subfamily. As to quaternary structure, monomer.

The catalysed reaction is Transfers a segment of a (1-&gt;4)-alpha-D-glucan chain to a primary hydroxy group in a similar glucan chain.. Its pathway is glycan biosynthesis; glycogen biosynthesis. Catalyzes the formation of the alpha-1,6-glucosidic linkages in glycogen by scission of a 1,4-alpha-linked oligosaccharide from growing alpha-1,4-glucan chains and the subsequent attachment of the oligosaccharide to the alpha-1,6 position. This chain is 1,4-alpha-glucan branching enzyme GlgB, found in Burkholderia pseudomallei (strain 1106a).